Reading from the N-terminus, the 247-residue chain is Cationic trypsin-3 (247 aa).

A signal peptide spans 1–15 (MKALIFLAFLGAAVA). Positions 16-24 (LPLDDDDDK) are cleaved as a propeptide — activation peptide. A Peptidase S1 domain is found at 25 to 245 (IVGGYTCQKN…YVNWIQQTVA (221 aa)). Intrachain disulfides connect Cys31–Cys161, Cys49–Cys65, Cys133–Cys234, Cys140–Cys207, Cys172–Cys186, and Cys197–Cys221. His64 serves as the catalytic Charge relay system. Residues Glu76, Asn78, Val81, and Glu86 each coordinate Ca(2+). Asp108 functions as the Charge relay system in the catalytic mechanism. The Charge relay system role is filled by Ser201.

Belongs to the peptidase S1 family. Requires Ca(2+) as cofactor.

The protein localises to the secreted. It localises to the extracellular space. The catalysed reaction is Preferential cleavage: Arg-|-Xaa, Lys-|-Xaa.. The sequence is that of Cationic trypsin-3 (Try3) from Rattus norvegicus (Rat).